Here is a 190-residue protein sequence, read N- to C-terminus: Probable gluconokinase (190 aa).

7–14 (GVSGSGKT) is a binding site for ATP.

This sequence belongs to the gluconokinase GntK/GntV family.

It catalyses the reaction D-gluconate + ATP = 6-phospho-D-gluconate + ADP + H(+). It functions in the pathway carbohydrate acid metabolism; D-gluconate degradation. The protein is Probable gluconokinase (idnk) of Xenopus tropicalis (Western clawed frog).